Consider the following 538-residue polypeptide: Beta-1-syntrophin (538 aa).

A2 is modified (N-acetylalanine). 2 PH domains span residues 19-298 and 322-433; these read RAQR…SNVN and EIRH…QGCH. Residues S87, S126, and S205 each carry the phosphoserine modification. The PDZ domain maps to 112–195; the sequence is GVKVLKQELG…EVLLEVKYMR (84 aa). The segment at 205 to 237 is disordered; sequence SPVSEIGWETPPPESPRLGGSTSDPPSSQSFSF. At T214 the chain carries Phosphothreonine. Phosphoserine is present on residues S219, S232, S236, and S389. Residues 225–236 show a composition bias toward low complexity; the sequence is STSDPPSSQSFS. The SU domain maps to 482-538; the sequence is PYEKLKMSSDDGIRMLYLDFGGKDGEIQLDLHSCPKPIVFIIHSFLSAKITRLGLVA. The interval 518 to 538 is calmodulin-binding; sequence PIVFIIHSFLSAKITRLGLVA.

This sequence belongs to the syntrophin family. As to quaternary structure, monomer and homodimer. Interacts with the other members of the syntrophin family SNTA1 and SNTB2; with the sodium channel proteins SCN4A and SCN5A. Interacts with the viral HTLV-1 TAX protein and with dystrophin protein DMD and related proteins DTNA and UTRN. Interacts with DTNB. Phosphorylated by CaM-kinase II. Ubiquitous.

The protein resides in the cell membrane. It localises to the sarcolemma. The protein localises to the cell junction. Its subcellular location is the cytoplasm. It is found in the cytoskeleton. Adapter protein that binds to and probably organizes the subcellular localization of a variety of membrane proteins. May link various receptors to the actin cytoskeleton and the dystrophin glycoprotein complex. In Homo sapiens (Human), this protein is Beta-1-syntrophin (SNTB1).